A 165-amino-acid polypeptide reads, in one-letter code: Probable chemoreceptor glutamine deamidase CheD (165 aa).

The protein belongs to the CheD family.

The catalysed reaction is L-glutaminyl-[protein] + H2O = L-glutamyl-[protein] + NH4(+). Probably deamidates glutamine residues to glutamate on methyl-accepting chemotaxis receptors (MCPs), playing an important role in chemotaxis. The chain is Probable chemoreceptor glutamine deamidase CheD from Geobacillus kaustophilus (strain HTA426).